A 472-amino-acid polypeptide reads, in one-letter code: 3-isopropylmalate dehydratase large subunit (472 aa).

[4Fe-4S] cluster is bound by residues C347, C407, and C410.

Belongs to the aconitase/IPM isomerase family. LeuC type 1 subfamily. In terms of assembly, heterodimer of LeuC and LeuD. [4Fe-4S] cluster serves as cofactor.

The enzyme catalyses (2R,3S)-3-isopropylmalate = (2S)-2-isopropylmalate. Its pathway is amino-acid biosynthesis; L-leucine biosynthesis; L-leucine from 3-methyl-2-oxobutanoate: step 2/4. In terms of biological role, catalyzes the isomerization between 2-isopropylmalate and 3-isopropylmalate, via the formation of 2-isopropylmaleate. In Bacillus subtilis (strain 168), this protein is 3-isopropylmalate dehydratase large subunit.